The primary structure comprises 379 residues: L-lactate dehydrogenase (379 aa).

The FMN hydroxy acid dehydrogenase domain maps to Met-1–Arg-379. Substrate is bound at residue Tyr-24. FMN contacts are provided by Ser-106 and Gln-127. Residue Tyr-129 coordinates substrate. Residue Thr-155 coordinates FMN. Arg-164 provides a ligand contact to substrate. Lys-251 serves as a coordination point for FMN. His-275 acts as the Proton acceptor in catalysis. Arg-278 is a binding site for substrate. Asp-306–Arg-330 provides a ligand contact to FMN.

Belongs to the FMN-dependent alpha-hydroxy acid dehydrogenase family. In terms of assembly, homotetramer. It depends on FMN as a cofactor.

Its subcellular location is the cell inner membrane. It catalyses the reaction (S)-lactate + A = pyruvate + AH2. Its function is as follows. Catalyzes the conversion of L-lactate to pyruvate. Is coupled to the respiratory chain. This chain is L-lactate dehydrogenase, found in Ectopseudomonas mendocina (strain ymp) (Pseudomonas mendocina).